We begin with the raw amino-acid sequence, 167 residues long: Endoribonuclease YbeY (167 aa).

A disordered region spans residues 64-101 (GKPTNVLSWPSEERASEEPGMAPEPPEPGDPEDPEPLG). Residues 90–99 (EPGDPEDPEP) are compositionally biased toward acidic residues. Residues H131, H135, and H141 each coordinate Zn(2+).

This sequence belongs to the endoribonuclease YbeY family. The cofactor is Zn(2+).

It localises to the cytoplasm. Functionally, single strand-specific metallo-endoribonuclease involved in late-stage 70S ribosome quality control and in maturation of the 3' terminus of the 16S rRNA. The chain is Endoribonuclease YbeY from Cereibacter sphaeroides (strain ATCC 17023 / DSM 158 / JCM 6121 / CCUG 31486 / LMG 2827 / NBRC 12203 / NCIMB 8253 / ATH 2.4.1.) (Rhodobacter sphaeroides).